A 228-amino-acid chain; its full sequence is Ion-translocating oxidoreductase complex subunit E (228 aa).

The next 5 membrane-spanning stretches (helical) occupy residues 24-44, 73-93, 95-115, 130-150, and 184-204; these read LLGL…LGLG, VFVL…NAFF, ELYL…AIIG, LADG…LGAL, and GFLL…LIAL.

The protein belongs to the NqrDE/RnfAE family. As to quaternary structure, the complex is composed of six subunits: RnfA, RnfB, RnfC, RnfD, RnfE and RnfG.

It is found in the cell inner membrane. In terms of biological role, part of a membrane-bound complex that couples electron transfer with translocation of ions across the membrane. This chain is Ion-translocating oxidoreductase complex subunit E, found in Thioalkalivibrio sulfidiphilus (strain HL-EbGR7).